The following is a 284-amino-acid chain: Release factor glutamine methyltransferase (284 aa).

Residues 125-129 (GVGSG), E148, and N190 contribute to the S-adenosyl-L-methionine site. 190-193 (NPPY) contacts substrate.

It belongs to the protein N5-glutamine methyltransferase family. PrmC subfamily.

It catalyses the reaction L-glutaminyl-[peptide chain release factor] + S-adenosyl-L-methionine = N(5)-methyl-L-glutaminyl-[peptide chain release factor] + S-adenosyl-L-homocysteine + H(+). In terms of biological role, methylates the class 1 translation termination release factors RF1/PrfA and RF2/PrfB on the glutamine residue of the universally conserved GGQ motif. The protein is Release factor glutamine methyltransferase of Geobacter sulfurreducens (strain ATCC 51573 / DSM 12127 / PCA).